Reading from the N-terminus, the 141-residue chain is Putative antiporter subunit mnhB2 (141 aa).

4 helical membrane passes run 10 to 30 (TVTK…FFAG), 35 to 55 (GGGF…FLAF), 70 to 90 (ILMI…MFFG), and 114 to 134 (ITLF…TVML).

This sequence belongs to the CPA3 antiporters (TC 2.A.63) subunit B family. May form a heterooligomeric complex that consists of seven subunits: mnhA2, mnhB2, mnhC2, mnhD2, mnhE2, mnhF2 and mnhG2.

It is found in the cell membrane. The polypeptide is Putative antiporter subunit mnhB2 (mnhB2) (Staphylococcus aureus (strain Mu3 / ATCC 700698)).